The following is a 353-amino-acid chain: Photosystem II D2 protein (353 aa).

At T2 the chain carries N-acetylthreonine. Phosphothreonine is present on T2. Residues 41–61 (CAYFALGGWFTGTTFVTSWYT) traverse the membrane as a helical segment. H118 contacts chlorophyll a. The helical transmembrane segment at 125-141 (GFMLRQFELARSVQLRP) threads the bilayer. Residues Q130 and N143 each coordinate pheophytin a. Residues 153-166 (VFVSVFLIYPLGQS) form a helical membrane-spanning segment. Residue H198 coordinates chlorophyll a. Residues 208–228 (AALLCAIHGATVENTLFEDGD) traverse the membrane as a helical segment. Residues H215 and F262 each contribute to the a plastoquinone site. Residue H215 participates in Fe cation binding. H269 provides a ligand contact to Fe cation. The chain crosses the membrane as a helical span at residues 279-295 (GLWMSALGVVGLALNLR).

Belongs to the reaction center PufL/M/PsbA/D family. As to quaternary structure, PSII is composed of 1 copy each of membrane proteins PsbA, PsbB, PsbC, PsbD, PsbE, PsbF, PsbH, PsbI, PsbJ, PsbK, PsbL, PsbM, PsbT, PsbX, PsbY, PsbZ, Psb30/Ycf12, at least 3 peripheral proteins of the oxygen-evolving complex and a large number of cofactors. It forms dimeric complexes. Requires The D1/D2 heterodimer binds P680, chlorophylls that are the primary electron donor of PSII, and subsequent electron acceptors. It shares a non-heme iron and each subunit binds pheophytin, quinone, additional chlorophylls, carotenoids and lipids. There is also a Cl(-1) ion associated with D1 and D2, which is required for oxygen evolution. The PSII complex binds additional chlorophylls, carotenoids and specific lipids. as cofactor.

The protein localises to the plastid. The protein resides in the chloroplast thylakoid membrane. It carries out the reaction 2 a plastoquinone + 4 hnu + 2 H2O = 2 a plastoquinol + O2. Photosystem II (PSII) is a light-driven water:plastoquinone oxidoreductase that uses light energy to abstract electrons from H(2)O, generating O(2) and a proton gradient subsequently used for ATP formation. It consists of a core antenna complex that captures photons, and an electron transfer chain that converts photonic excitation into a charge separation. The D1/D2 (PsbA/PsbD) reaction center heterodimer binds P680, the primary electron donor of PSII as well as several subsequent electron acceptors. D2 is needed for assembly of a stable PSII complex. The polypeptide is Photosystem II D2 protein (Amborella trichopoda).